The sequence spans 1188 residues: DNA-directed RNA polymerase subunit beta (1188 aa).

It belongs to the RNA polymerase beta chain family. As to quaternary structure, the RNAP catalytic core consists of 2 alpha, 1 beta, 1 beta' and 1 omega subunit. When a sigma factor is associated with the core the holoenzyme is formed, which can initiate transcription.

The enzyme catalyses RNA(n) + a ribonucleoside 5'-triphosphate = RNA(n+1) + diphosphate. Functionally, DNA-dependent RNA polymerase catalyzes the transcription of DNA into RNA using the four ribonucleoside triphosphates as substrates. In Streptococcus equi subsp. equi (strain 4047), this protein is DNA-directed RNA polymerase subunit beta.